Here is a 199-residue protein sequence, read N- to C-terminus: Large ribosomal subunit protein bL9 (199 aa).

Residues 149–166 (AEAERINRGEDINSRQED) show a composition bias toward basic and acidic residues. Residues 149-199 (AEAERINRGEDINSRQEDQDAAAEAIAAAGEFFDPEAQDETPETEAASEQQ) form a disordered region. The segment covering 181–191 (FDPEAQDETPE) has biased composition (acidic residues).

The protein belongs to the bacterial ribosomal protein bL9 family.

Binds to the 23S rRNA. The protein is Large ribosomal subunit protein bL9 of Afipia carboxidovorans (strain ATCC 49405 / DSM 1227 / KCTC 32145 / OM5) (Oligotropha carboxidovorans).